The chain runs to 562 residues: Urease subunit alpha (562 aa).

Residues 131–562 enclose the Urease domain; it reads GGMDCHIHFI…LPMAQRYFLF (432 aa). Positions 136, 138, and 219 each coordinate Ni(2+). The residue at position 219 (lysine 219) is an N6-carboxylysine. Residue histidine 221 participates in substrate binding. The Ni(2+) site is built by histidine 248 and histidine 274. Histidine 322 acts as the Proton donor in catalysis. Aspartate 362 lines the Ni(2+) pocket.

The protein belongs to the metallo-dependent hydrolases superfamily. Urease alpha subunit family. Heterotrimer of UreA (gamma), UreB (beta) and UreC (alpha) subunits. Three heterotrimers associate to form the active enzyme. Ni cation is required as a cofactor. Carboxylation allows a single lysine to coordinate two nickel ions.

The protein resides in the cytoplasm. The enzyme catalyses urea + 2 H2O + H(+) = hydrogencarbonate + 2 NH4(+). The protein operates within nitrogen metabolism; urea degradation; CO(2) and NH(3) from urea (urease route): step 1/1. In Paracoccus denitrificans (strain Pd 1222), this protein is Urease subunit alpha.